The following is a 526-amino-acid chain: Berberine bridge enzyme-like 11 (526 aa).

An N-terminal signal peptide occupies residues Met1–Ser21. A disulfide bond links Cys31 and Cys94. N-linked (GlcNAc...) asparagine glycosylation is found at Asn52, Asn136, Asn273, and Asn482. Residues Thr72–Val247 form the FAD-binding PCMH-type domain. The 6-(S-cysteinyl)-8alpha-(pros-histidyl)-FAD (His-Cys) cross-link spans His109–Cys171.

It belongs to the oxygen-dependent FAD-linked oxidoreductase family. FAD is required as a cofactor. In terms of processing, the FAD cofactor is bound via a bicovalent 6-S-cysteinyl, 8alpha-N1-histidyl FAD linkage.

The protein resides in the secreted. It is found in the cell wall. This chain is Berberine bridge enzyme-like 11, found in Arabidopsis thaliana (Mouse-ear cress).